Consider the following 375-residue polypeptide: Queuine tRNA-ribosyltransferase (375 aa).

Asp94 serves as the catalytic Proton acceptor. Substrate is bound by residues 94–98 (DSGGF), Asp148, Gln191, and Gly218. The segment at 249 to 255 (GVGSPDD) is RNA binding. Catalysis depends on Asp268, which acts as the Nucleophile. The segment at 273–277 (TRIAR) is RNA binding; important for wobble base 34 recognition. Residues Cys306, Cys308, Cys311, and His337 each contribute to the Zn(2+) site.

This sequence belongs to the queuine tRNA-ribosyltransferase family. As to quaternary structure, homodimer. Within each dimer, one monomer is responsible for RNA recognition and catalysis, while the other monomer binds to the replacement base PreQ1. The cofactor is Zn(2+).

The catalysed reaction is 7-aminomethyl-7-carbaguanine + guanosine(34) in tRNA = 7-aminomethyl-7-carbaguanosine(34) in tRNA + guanine. It participates in tRNA modification; tRNA-queuosine biosynthesis. Catalyzes the base-exchange of a guanine (G) residue with the queuine precursor 7-aminomethyl-7-deazaguanine (PreQ1) at position 34 (anticodon wobble position) in tRNAs with GU(N) anticodons (tRNA-Asp, -Asn, -His and -Tyr). Catalysis occurs through a double-displacement mechanism. The nucleophile active site attacks the C1' of nucleotide 34 to detach the guanine base from the RNA, forming a covalent enzyme-RNA intermediate. The proton acceptor active site deprotonates the incoming PreQ1, allowing a nucleophilic attack on the C1' of the ribose to form the product. After dissociation, two additional enzymatic reactions on the tRNA convert PreQ1 to queuine (Q), resulting in the hypermodified nucleoside queuosine (7-(((4,5-cis-dihydroxy-2-cyclopenten-1-yl)amino)methyl)-7-deazaguanosine). The protein is Queuine tRNA-ribosyltransferase of Thermoanaerobacter sp. (strain X514).